Reading from the N-terminus, the 259-residue chain is 7alpha-hydroxysteroid dehydrogenase (259 aa).

NAD(+) contacts are provided by residues Ile18, 37-38 (DY), and Asn90. 2 residues coordinate glycochenodeoxycholate: Ser145 and Tyr158. NAD(+)-binding positions include Tyr158, Lys162, and 191-193 (ILT). Tyr158 acts as the Proton acceptor in catalysis.

This sequence belongs to the short-chain dehydrogenases/reductases (SDR) family. In terms of assembly, homotetramer.

The enzyme catalyses cholate + NAD(+) = 3alpha,12alpha-dihydroxy-7-oxo-5beta-cholanate + NADH + H(+). It catalyses the reaction chenodeoxycholate + NAD(+) = 7-oxolithocholate + NADH + H(+). It carries out the reaction taurochenodeoxycholate + NAD(+) = 7-oxotaurolithocholate + NADH + H(+). The catalysed reaction is glycochenodeoxycholate + NAD(+) = 7-oxoglycolithocholate + NADH + H(+). The enzyme catalyses taurocholate + NAD(+) = 7-oxo-taurodeoxycholate + NADH + H(+). It catalyses the reaction glycocholate + NAD(+) = 7-oxo-glycodeoxycholate + NADH + H(+). It carries out the reaction an aromatic primary alcohol + NAD(+) = an aromatic aldehyde + NADH + H(+). The catalysed reaction is benzyl alcohol + NAD(+) = benzaldehyde + NADH + H(+). The enzyme catalyses 4-cyanobenzyl alcohol + NAD(+) = 4-cyanobenzaldehyde + NADH + H(+). It catalyses the reaction 4-acetoxybenzyl alcohol + NAD(+) = 4-acetoxybenzaldehyde + NADH + H(+). It carries out the reaction 4-(trifluoromethyl)benzyl alcohol + NAD(+) = 4-(trifluoromethyl)benzaldehyde + NADH + H(+). Its function is as follows. 7alpha-hydroxysteroid dehydrogenase involved in the metabolism of bile acids in the gut. Catalyzes the NAD(+)-dependent oxidation of the 7alpha-hydroxy group of 7alpha-hydroxysteroids, such as cholate, chenodeoxycholate, taurochenodeoxycholate, glycochenodeoxycholate, taurocholate and glycocholate, to the corresponding 7-oxosteroids. Since it is also able to catalyze the reduction of nonsteroidal carbonyl compounds such as various benzaldehyde analogs to their corresponding benzyl alcohols, this enzyme may also function in the detoxification of xenobiotics containing carbonyl groups in the large intestine. The protein is 7alpha-hydroxysteroid dehydrogenase of Bacteroides fragilis (strain ATCC 25285 / DSM 2151 / CCUG 4856 / JCM 11019 / LMG 10263 / NCTC 9343 / Onslow / VPI 2553 / EN-2).